Consider the following 201-residue polypeptide: 3-isopropylmalate dehydratase small subunit (201 aa).

Belongs to the LeuD family. LeuD type 1 subfamily. As to quaternary structure, heterodimer of LeuC and LeuD.

It catalyses the reaction (2R,3S)-3-isopropylmalate = (2S)-2-isopropylmalate. It participates in amino-acid biosynthesis; L-leucine biosynthesis; L-leucine from 3-methyl-2-oxobutanoate: step 2/4. In terms of biological role, catalyzes the isomerization between 2-isopropylmalate and 3-isopropylmalate, via the formation of 2-isopropylmaleate. The chain is 3-isopropylmalate dehydratase small subunit from Shewanella woodyi (strain ATCC 51908 / MS32).